Reading from the N-terminus, the 115-residue chain is MHEFSIVQSLLTLIEDYARENNAKSVTKVVVSIGVLSGVEPHLLEMAFNTFKEGTVAEKAELIMEIEKLKIKCMDCGKESEKEELNMLCPGCGSLNTQIISGQDMFLKSLELEVD.

His-2 lines the Ni(2+) pocket. Residues Cys-73, Cys-76, Cys-89, and Cys-92 each contribute to the Zn(2+) site.

The protein belongs to the HypA/HybF family.

Functionally, involved in the maturation of [NiFe] hydrogenases. Required for nickel insertion into the metal center of the hydrogenase. The sequence is that of Hydrogenase maturation factor HypA from Aquifex aeolicus (strain VF5).